Consider the following 365-residue polypeptide: 2-aminoethylphosphonate--pyruvate transaminase (365 aa).

Position 194 is an N6-(pyridoxal phosphate)lysine (K194).

The protein belongs to the class-V pyridoxal-phosphate-dependent aminotransferase family. PhnW subfamily. As to quaternary structure, homodimer. The cofactor is pyridoxal 5'-phosphate.

The enzyme catalyses (2-aminoethyl)phosphonate + pyruvate = phosphonoacetaldehyde + L-alanine. Functionally, involved in phosphonate degradation. The chain is 2-aminoethylphosphonate--pyruvate transaminase from Bacillus cereus (strain G9842).